The sequence spans 256 residues: Thiazole synthase (256 aa).

The active-site Schiff-base intermediate with DXP is lysine 96. Residues glycine 157, 184-185 (AG), and 206-207 (NT) each bind 1-deoxy-D-xylulose 5-phosphate.

The protein belongs to the ThiG family. Homotetramer. Forms heterodimers with either ThiH or ThiS.

The protein localises to the cytoplasm. It catalyses the reaction [ThiS sulfur-carrier protein]-C-terminal-Gly-aminoethanethioate + 2-iminoacetate + 1-deoxy-D-xylulose 5-phosphate = [ThiS sulfur-carrier protein]-C-terminal Gly-Gly + 2-[(2R,5Z)-2-carboxy-4-methylthiazol-5(2H)-ylidene]ethyl phosphate + 2 H2O + H(+). It functions in the pathway cofactor biosynthesis; thiamine diphosphate biosynthesis. Its function is as follows. Catalyzes the rearrangement of 1-deoxy-D-xylulose 5-phosphate (DXP) to produce the thiazole phosphate moiety of thiamine. Sulfur is provided by the thiocarboxylate moiety of the carrier protein ThiS. In vitro, sulfur can be provided by H(2)S. The protein is Thiazole synthase of Brucella abortus (strain S19).